The following is a 474-amino-acid chain: Bifunctional protein HldE (474 aa).

Positions 1-317 are ribokinase; the sequence is MKLSMPRFDR…RRAVQREQGS (317 aa). Position 194-197 (194-197) interacts with ATP; the sequence is NLAE. The active site involves Asp263. A cytidylyltransferase region spans residues 343 to 474; it reads FTNGCFDILH…GIVEKIRRQP (132 aa).

In the N-terminal section; belongs to the carbohydrate kinase PfkB family. It in the C-terminal section; belongs to the cytidylyltransferase family. In terms of assembly, homodimer.

It catalyses the reaction D-glycero-beta-D-manno-heptose 7-phosphate + ATP = D-glycero-beta-D-manno-heptose 1,7-bisphosphate + ADP + H(+). It carries out the reaction D-glycero-beta-D-manno-heptose 1-phosphate + ATP + H(+) = ADP-D-glycero-beta-D-manno-heptose + diphosphate. It participates in nucleotide-sugar biosynthesis; ADP-L-glycero-beta-D-manno-heptose biosynthesis; ADP-L-glycero-beta-D-manno-heptose from D-glycero-beta-D-manno-heptose 7-phosphate: step 1/4. Its pathway is nucleotide-sugar biosynthesis; ADP-L-glycero-beta-D-manno-heptose biosynthesis; ADP-L-glycero-beta-D-manno-heptose from D-glycero-beta-D-manno-heptose 7-phosphate: step 3/4. In terms of biological role, catalyzes the phosphorylation of D-glycero-D-manno-heptose 7-phosphate at the C-1 position to selectively form D-glycero-beta-D-manno-heptose-1,7-bisphosphate. Functionally, catalyzes the ADP transfer from ATP to D-glycero-beta-D-manno-heptose 1-phosphate, yielding ADP-D-glycero-beta-D-manno-heptose. The sequence is that of Bifunctional protein HldE from Azotobacter vinelandii (strain DJ / ATCC BAA-1303).